The chain runs to 287 residues: MKLKFTKMHGAGNDFVVLDGYTQPVNLTPAQVRALADRHFGVGADQLLLVEKPTVAGVDFRYRIFNCDGGEVEHCGNGARCFVKFVRERGLTDQRSVRVQVQKGTITLTMQENGEVLVDMGTPVFDPERVPFATKGLEGRREGADTLWPLDVSGTTRWISVVSMGNPHAVQVVGDVEAFPVLAEGPVIERHARFPQRVNAGFMQIVGRNEIRLRVYERGAGETLACGTGACAAVAAGIRRGLLDSPVRVHTHGGDLTISWDSTREGEPLLMAGPAVTVFEGEIELPD.

Substrate is bound by residues N13, Q46, and N66. C75 (proton donor) is an active-site residue. Substrate contacts are provided by residues 76 to 77, N166, N199, and 217 to 218; these read GN and ER. Residue C226 is the Proton acceptor of the active site. Substrate is bound at residue 227–228; it reads GT.

The protein belongs to the diaminopimelate epimerase family. Homodimer.

Its subcellular location is the cytoplasm. It catalyses the reaction (2S,6S)-2,6-diaminopimelate = meso-2,6-diaminopimelate. The protein operates within amino-acid biosynthesis; L-lysine biosynthesis via DAP pathway; DL-2,6-diaminopimelate from LL-2,6-diaminopimelate: step 1/1. Functionally, catalyzes the stereoinversion of LL-2,6-diaminopimelate (L,L-DAP) to meso-diaminopimelate (meso-DAP), a precursor of L-lysine and an essential component of the bacterial peptidoglycan. The polypeptide is Diaminopimelate epimerase (Paraburkholderia xenovorans (strain LB400)).